Here is a 295-residue protein sequence, read N- to C-terminus: Bifunctional protein FolD (295 aa).

NADP(+) is bound by residues 166–168 (GRS), S195, and I236.

This sequence belongs to the tetrahydrofolate dehydrogenase/cyclohydrolase family. As to quaternary structure, homodimer.

It carries out the reaction (6R)-5,10-methylene-5,6,7,8-tetrahydrofolate + NADP(+) = (6R)-5,10-methenyltetrahydrofolate + NADPH. The enzyme catalyses (6R)-5,10-methenyltetrahydrofolate + H2O = (6R)-10-formyltetrahydrofolate + H(+). Its pathway is one-carbon metabolism; tetrahydrofolate interconversion. Its function is as follows. Catalyzes the oxidation of 5,10-methylenetetrahydrofolate to 5,10-methenyltetrahydrofolate and then the hydrolysis of 5,10-methenyltetrahydrofolate to 10-formyltetrahydrofolate. The polypeptide is Bifunctional protein FolD (Chlorobium luteolum (strain DSM 273 / BCRC 81028 / 2530) (Pelodictyon luteolum)).